A 1299-amino-acid polypeptide reads, in one-letter code: Phosphoribosylformylglycinamidine synthase (1299 aa).

Residues 310 to 321, 389 to 391, and alanine 680 contribute to the ATP site; these read GAATGAGGEIRD and TGY. Residues aspartate 681, glutamate 720, asparagine 724, and aspartate 888 each contribute to the Mg(2+) site. ATP is bound at residue serine 890. Positions 1046 to 1299 constitute a Glutamine amidotransferase type-1 domain; that stretch reads VAVLREQGVN…MFRNARVWLG (254 aa). Cysteine 1139 acts as the Nucleophile in catalysis. Residues histidine 1264 and glutamate 1266 contribute to the active site.

In the N-terminal section; belongs to the FGAMS family. As to quaternary structure, monomer.

Its subcellular location is the cytoplasm. It carries out the reaction N(2)-formyl-N(1)-(5-phospho-beta-D-ribosyl)glycinamide + L-glutamine + ATP + H2O = 2-formamido-N(1)-(5-O-phospho-beta-D-ribosyl)acetamidine + L-glutamate + ADP + phosphate + H(+). It functions in the pathway purine metabolism; IMP biosynthesis via de novo pathway; 5-amino-1-(5-phospho-D-ribosyl)imidazole from N(2)-formyl-N(1)-(5-phospho-D-ribosyl)glycinamide: step 1/2. Functionally, phosphoribosylformylglycinamidine synthase involved in the purines biosynthetic pathway. Catalyzes the ATP-dependent conversion of formylglycinamide ribonucleotide (FGAR) and glutamine to yield formylglycinamidine ribonucleotide (FGAM) and glutamate. This chain is Phosphoribosylformylglycinamidine synthase, found in Myxococcus xanthus (strain DK1622).